Here is a 1394-residue protein sequence, read N- to C-terminus: ATP-dependent permease AUS1 (1394 aa).

The Cytoplasmic portion of the chain corresponds to 1–420 (MSISKYFTPV…PLTTIGSYSR (420 aa)). One can recognise an ABC transporter 1 domain in the interval 33-273 (KKSYDAEDSM…FRDTLGIEKD (241 aa)). The next 6 helical transmembrane spans lie at 421-443 (GSLT…PIAF), 468-490 (TVFD…YFLA), 497-519 (ARFF…LFAL), 529-551 (VANL…VIYL), 558-575 (FVWI…EAIL), and 636-658 (VWRN…LFAS). Topologically, residues 659-1080 (QYIKPYFNKD…QYICTKRDMT (422 aa)) are cytoplasmic. Residues 751–978 (ISWKNINYTV…YFMSHDNTLV (228 aa)) enclose the ABC transporter 2 domain. Residue 782–789 (GESGAGKT) coordinates ATP. Helical transmembrane passes span 1081–1103 (YVMA…FWHI), 1107–1129 (IIGL…PLIN), 1156–1178 (VLLL…LFFV), 1193–1215 (AGVF…LWLI), 1224–1246 (AAVF…QPYS), and 1346–1368 (FGIE…YLTY). Over 1369–1394 (VARIWPKVFKIITKVIPHRGKKPVQN) the chain is Cytoplasmic.

It belongs to the ABC transporter superfamily. ABCG family. PDR (TC 3.A.1.205) subfamily.

The protein localises to the membrane. Its function is as follows. Transporter involved in the uptake of sterol. This Saccharomyces cerevisiae (strain ATCC 204508 / S288c) (Baker's yeast) protein is ATP-dependent permease AUS1 (AUS1).